The chain runs to 269 residues: Hydroxyethylthiazole kinase (269 aa).

Substrate is bound at residue M42. ATP is bound by residues R118 and S164. A substrate-binding site is contributed by G191.

The protein belongs to the Thz kinase family. Mg(2+) serves as cofactor.

It carries out the reaction 5-(2-hydroxyethyl)-4-methylthiazole + ATP = 4-methyl-5-(2-phosphooxyethyl)-thiazole + ADP + H(+). It participates in cofactor biosynthesis; thiamine diphosphate biosynthesis; 4-methyl-5-(2-phosphoethyl)-thiazole from 5-(2-hydroxyethyl)-4-methylthiazole: step 1/1. Functionally, catalyzes the phosphorylation of the hydroxyl group of 4-methyl-5-beta-hydroxyethylthiazole (THZ). This Listeria monocytogenes serotype 4b (strain F2365) protein is Hydroxyethylthiazole kinase.